The primary structure comprises 60 residues: Large ribosomal subunit protein bL32 (60 aa).

The protein belongs to the bacterial ribosomal protein bL32 family.

This chain is Large ribosomal subunit protein bL32, found in Borrelia duttonii (strain Ly).